The following is a 703-amino-acid chain: Polyribonucleotide nucleotidyltransferase (703 aa).

The Mg(2+) site is built by Asp484 and Asp490. The KH domain occupies 551 to 610 (PTVTTLRVLPEKISVIIGPAGKNIKKIIEETGVKIDLDPTGLVKIYATSKIAAEKAIDMI). The S1 motif domain occupies 620–688 (GEVYLGKVTR…DQGRIKVSLK (69 aa)).

Belongs to the polyribonucleotide nucleotidyltransferase family. The cofactor is Mg(2+).

The protein resides in the cytoplasm. It catalyses the reaction RNA(n+1) + phosphate = RNA(n) + a ribonucleoside 5'-diphosphate. Its function is as follows. Involved in mRNA degradation. Catalyzes the phosphorolysis of single-stranded polyribonucleotides processively in the 3'- to 5'-direction. In Sulfurihydrogenibium sp. (strain YO3AOP1), this protein is Polyribonucleotide nucleotidyltransferase.